A 283-amino-acid polypeptide reads, in one-letter code: Acetylglutamate kinase (283 aa).

Substrate contacts are provided by residues 64–65 (GG), R86, and N181.

It belongs to the acetylglutamate kinase family. ArgB subfamily.

The protein resides in the cytoplasm. The catalysed reaction is N-acetyl-L-glutamate + ATP = N-acetyl-L-glutamyl 5-phosphate + ADP. The protein operates within amino-acid biosynthesis; L-arginine biosynthesis; N(2)-acetyl-L-ornithine from L-glutamate: step 2/4. Catalyzes the ATP-dependent phosphorylation of N-acetyl-L-glutamate. The sequence is that of Acetylglutamate kinase from Sulfurovum sp. (strain NBC37-1).